The following is a 358-amino-acid chain: MFYNFLSPLASEWTFFNVFRYITFRSMAALMTALLISIILGPRFITWLRRLKCGQYIHEDVAAHACKAGTPTMGGLLMLFSLSVSLLLWADLTNIYIWQAFFVFAGFGAVGFWDDITKLRHHKNRGISGKAKMGGQLAVACVAMLLLFVNPDYSSKLTIPFFKEVTFDLGWFYLPFGVFVMVAASNAVNLTDGLDGLAIGPSIVACIVFSIFIYITGNARFAGYLLVPYMPGVGEVTIFCAALVGAGLGFLWFNAYPAQVFMGDVGSLSIGGVLGYLALLCKQELVLAVVGGLFVAETLSVIVQVGYFRWTGGKRFFRMAPLHHHFELKGVPESKIIIRFWITSILLGLMALSVLKLR.

10 helical membrane passes run 28 to 48, 70 to 90, 92 to 112, 133 to 153, 165 to 185, 196 to 216, 233 to 253, 260 to 280, 285 to 305, and 335 to 355; these read AALMTALLISIILGPRFITWL, TPTMGGLLMLFSLSVSLLLWA, LTNIYIWQAFFVFAGFGAVGF, MGGQLAVACVAMLLLFVNPDY, VTFDLGWFYLPFGVFVMVAAS, GLAIGPSIVACIVFSIFIYIT, VGEVTIFCAALVGAGLGFLWF, VFMGDVGSLSIGGVLGYLALL, LVLAVVGGLFVAETLSVIVQV, and KIIIRFWITSILLGLMALSVL.

This sequence belongs to the glycosyltransferase 4 family. MraY subfamily. Mg(2+) is required as a cofactor.

Its subcellular location is the cell inner membrane. The catalysed reaction is UDP-N-acetyl-alpha-D-muramoyl-L-alanyl-gamma-D-glutamyl-meso-2,6-diaminopimeloyl-D-alanyl-D-alanine + di-trans,octa-cis-undecaprenyl phosphate = di-trans,octa-cis-undecaprenyl diphospho-N-acetyl-alpha-D-muramoyl-L-alanyl-D-glutamyl-meso-2,6-diaminopimeloyl-D-alanyl-D-alanine + UMP. The protein operates within cell wall biogenesis; peptidoglycan biosynthesis. Functionally, catalyzes the initial step of the lipid cycle reactions in the biosynthesis of the cell wall peptidoglycan: transfers peptidoglycan precursor phospho-MurNAc-pentapeptide from UDP-MurNAc-pentapeptide onto the lipid carrier undecaprenyl phosphate, yielding undecaprenyl-pyrophosphoryl-MurNAc-pentapeptide, known as lipid I. This Desulfovibrio desulfuricans (strain ATCC 27774 / DSM 6949 / MB) protein is Phospho-N-acetylmuramoyl-pentapeptide-transferase.